A 473-amino-acid polypeptide reads, in one-letter code: Glutamate--tRNA ligase (473 aa).

The 'HIGH' region motif lies at 11–21 (PSPTGFLHIGG). Residues 240–244 (KLSKR) carry the 'KMSKS' region motif. K243 contributes to the ATP binding site.

It belongs to the class-I aminoacyl-tRNA synthetase family. Glutamate--tRNA ligase type 1 subfamily. Monomer.

The protein localises to the cytoplasm. The enzyme catalyses tRNA(Glu) + L-glutamate + ATP = L-glutamyl-tRNA(Glu) + AMP + diphosphate. Its function is as follows. Catalyzes the attachment of glutamate to tRNA(Glu) in a two-step reaction: glutamate is first activated by ATP to form Glu-AMP and then transferred to the acceptor end of tRNA(Glu). This Rhodopseudomonas palustris (strain TIE-1) protein is Glutamate--tRNA ligase.